The chain runs to 339 residues: Serpentine receptor class delta-32 (339 aa).

Helical transmembrane passes span alanine 14 to phenylalanine 34, valine 45 to valine 65, isoleucine 94 to valine 114, serine 128 to isoleucine 148, leucine 188 to cysteine 208, alanine 237 to leucine 257, and phenylalanine 269 to isoleucine 289.

It belongs to the nematode receptor-like protein srd family.

It localises to the membrane. This chain is Serpentine receptor class delta-32 (srd-32), found in Caenorhabditis elegans.